We begin with the raw amino-acid sequence, 444 residues long: tRNA modification GTPase MnmE (444 aa).

3 residues coordinate (6S)-5-formyl-5,6,7,8-tetrahydrofolate: Arg-25, Glu-83, and Lys-122. The TrmE-type G domain occupies 218 to 370 (GFKVAIVGKP…IVGRLRDYLD (153 aa)). GTP contacts are provided by residues 228 to 233 (NVGKSS), 247 to 253 (SDEAGTT), and 272 to 275 (DTAG). Ser-232 and Thr-253 together coordinate Mg(2+). Residue Lys-444 coordinates (6S)-5-formyl-5,6,7,8-tetrahydrofolate.

The protein belongs to the TRAFAC class TrmE-Era-EngA-EngB-Septin-like GTPase superfamily. TrmE GTPase family. Homodimer. Heterotetramer of two MnmE and two MnmG subunits. K(+) is required as a cofactor.

It is found in the cytoplasm. Exhibits a very high intrinsic GTPase hydrolysis rate. Involved in the addition of a carboxymethylaminomethyl (cmnm) group at the wobble position (U34) of certain tRNAs, forming tRNA-cmnm(5)s(2)U34. The sequence is that of tRNA modification GTPase MnmE from Campylobacter curvus (strain 525.92).